We begin with the raw amino-acid sequence, 216 residues long: Ribosomal RNA large subunit methyltransferase E (216 aa).

The S-adenosyl-L-methionine site is built by glycine 60, tryptophan 62, aspartate 80, aspartate 96, and aspartate 121. Catalysis depends on lysine 161, which acts as the Proton acceptor.

It belongs to the class I-like SAM-binding methyltransferase superfamily. RNA methyltransferase RlmE family.

It is found in the cytoplasm. It carries out the reaction uridine(2552) in 23S rRNA + S-adenosyl-L-methionine = 2'-O-methyluridine(2552) in 23S rRNA + S-adenosyl-L-homocysteine + H(+). In terms of biological role, specifically methylates the uridine in position 2552 of 23S rRNA at the 2'-O position of the ribose in the fully assembled 50S ribosomal subunit. The sequence is that of Ribosomal RNA large subunit methyltransferase E from Pseudomonas syringae pv. syringae (strain B728a).